Consider the following 342-residue polypeptide: Periplasmic protein TorT (342 aa).

Residues 1–18 form the signal peptide; sequence MRVLLFLLLSLFMLPAFS.

The protein belongs to the bacterial solute-binding protein 2 family.

It is found in the periplasm. In terms of biological role, upon binding a putative inducer it probably interacts with TorS and allows it to play a role in the induction of the torCAD operon for trimethylamine N-oxide reductase. The protein is Periplasmic protein TorT (torT) of Escherichia coli (strain K12).